Consider the following 247-residue polypeptide: Putative urease accessory protein UreD homolog (247 aa).

This sequence belongs to the UreD family. UreD, UreF and UreG form a complex that acts as a GTP-hydrolysis-dependent molecular chaperone, activating the urease apoprotein by helping to assemble the nickel containing metallocenter of UreC. The UreE protein probably delivers the nickel.

Its subcellular location is the cytoplasm. Required for maturation of urease via the functional incorporation of the urease nickel metallocenter. The polypeptide is Putative urease accessory protein UreD homolog (Escherichia coli O157:H7).